Consider the following 354-residue polypeptide: Adenine deaminase (354 aa).

Residues His20, His22, and His200 each coordinate Zn(2+). Catalysis depends on Glu203, which acts as the Proton donor. A Zn(2+)-binding site is contributed by Asp281. Asp282 contributes to the substrate binding site.

Belongs to the metallo-dependent hydrolases superfamily. Adenosine and AMP deaminases family. Adenine deaminase type 2 subfamily. Zn(2+) serves as cofactor.

The catalysed reaction is adenine + H2O + H(+) = hypoxanthine + NH4(+). Catalyzes the hydrolytic deamination of adenine to hypoxanthine. Plays an important role in the purine salvage pathway and in nitrogen catabolism. The sequence is that of Adenine deaminase from Cupriavidus metallidurans (strain ATCC 43123 / DSM 2839 / NBRC 102507 / CH34) (Ralstonia metallidurans).